The following is a 126-amino-acid chain: Protein ApaG (126 aa).

The region spanning 2–126 (SALDTSIRVE…FRLATPGLLH (125 aa)) is the ApaG domain.

The chain is Protein ApaG from Shewanella baltica (strain OS223).